Here is a 221-residue protein sequence, read N- to C-terminus: Oxaloacetate tautomerase FAHD1, mitochondrial (221 aa).

The N-terminal 24 residues, 1-24 (MASTKPLSRFWEWGKNIVCVGRNY), are a transit peptide targeting the mitochondrion. An oxalate-binding site is contributed by Arg22. Position 37 is a phosphoserine (Ser37). Positions 68, 70, and 99 each coordinate Mg(2+). Lys110 is modified (N6-acetyllysine). Lys112 carries the N6-succinyllysine modification. Lys120 is an oxalate binding site.

It belongs to the FAH family. As to quaternary structure, homodimer. Requires Mg(2+) as cofactor. Mn(2+) serves as cofactor. In terms of tissue distribution, ubiquitous with higher expression in the liver and the kidney (at protein level).

Its subcellular location is the mitochondrion. The protein resides in the cytoplasm. It is found in the cytosol. It carries out the reaction oxaloacetate = enol-oxaloacetate. The enzyme catalyses oxaloacetate + H(+) = pyruvate + CO2. The catalysed reaction is a 3-acylpyruvate + H2O = a carboxylate + pyruvate + H(+). It catalyses the reaction acetylpyruvate + H2O = acetate + pyruvate + H(+). It carries out the reaction 3-fumarylpyruvate + H2O = fumarate + pyruvate + H(+). With respect to regulation, oxaloacetate decarboxylation is potently and competitively inhibited by oxalate. Its function is as follows. Tautomerase that converts enol-oxaloacetate, a strong inhibitor of succinate dehydrogenase, to the physiological keto form of oxaloacetate. It is thereby required to maximize aerobic respiration efficiency by preventing succinate dehydrogenase inhibition. Also acts as a weak oxaloacetate decarboxylase (ODx), catalyzing the decarboxylation of oxaloacetate (OAA) to pyruvate and CO(2), and as such is likely a regulatory enzyme in the TCA cycle. Also displays acylpyruvase activity, being able to hydrolyze acetylpyruvate and fumarylpyruvate in vitro. In Mus musculus (Mouse), this protein is Oxaloacetate tautomerase FAHD1, mitochondrial.